A 585-amino-acid chain; its full sequence is MSDITDKTAEQLEQLKIEEQTAPTTTESETPKVETSGASLYVGELEPTVSEALLYDIFSPIGSVSSIRVCRDAITNTSLGYAYVNFHDHEAGPKAIEQLNYTLIKGKPCRIMWSQRDPSLRKKGSGNIYIKNLHPAIDNKSLHETFSTFGNILSCKVATDENGVSRGFGFVHFENESDARDAIEAVDGMLMNDQEVYVALHVSKKDRQSKLEEVKAKFTNVYVKNIDQETSQEEFEELFGKYGKITSAVLEKDSEGKLRGFGFVNFEDHAAAAKAVDELNELEFKGQKLYVGRAQKKYERLQELKKQYEAARLEKLAKYQGVNLFVKNLDDSIDDEKLKEEFAPFGTITSAKVMRDETGNSRGFGFVCFSTPEEATKAITEKNQQIVAGKPLYVAIAQRKEVRRNQLAQQIQARNQMRFQHANAAAAAAVAGLPGQFMPPPMYYGGIPPRVPFQGPNPQMAGMPKNGAMPPQQFGRPGPMYGGFAPQGQFPRNGQQQQFYQQKQRQALGEQLYQKVFAKTQDDEAAGKITGMILDLPPQQVIQLLENDELLEQHFQEAHAAYQKFKEDQEAQAAAAAAAAADARE.

The tract at residues Gln-14–Gly-37 is disordered. 4 RRM domains span residues Ala-38–Arg-116, Gly-126–Ser-203, Thr-219–Lys-296, and Val-322–Arg-399. Positions Gly-488–Glu-567 constitute a PABC domain.

The protein belongs to the polyadenylate-binding protein type-1 family.

Its subcellular location is the cytoplasm. The protein localises to the nucleus. Binds the poly(A) tail of mRNA. Appears to be an important mediator of the multiple roles of the poly(A) tail in mRNA biogenesis, stability and translation. In the nucleus, involved in both mRNA cleavage and polyadenylation. Is also required for efficient mRNA export to the cytoplasm. Acts in concert with a poly(A)-specific nuclease (PAN) to affect poly(A) tail shortening, which may occur concomitantly with either nucleocytoplasmic mRNA transport or translational initiation. In the cytoplasm, stimulates translation initiation and regulates mRNA decay through translation termination-coupled poly(A) shortening, probably mediated by PAN. The chain is Polyadenylate-binding protein, cytoplasmic and nuclear (PAB1) from Eremothecium gossypii (strain ATCC 10895 / CBS 109.51 / FGSC 9923 / NRRL Y-1056) (Yeast).